Consider the following 91-residue polypeptide: Large ribosomal subunit protein bL31B (91 aa).

Belongs to the bacterial ribosomal protein bL31 family. Type B subfamily. Part of the 50S ribosomal subunit.

The sequence is that of Large ribosomal subunit protein bL31B from Neisseria gonorrhoeae (strain ATCC 700825 / FA 1090).